Here is a 430-residue protein sequence, read N- to C-terminus: Hydrogenobyrinate a,c-diamide synthase (430 aa).

One can recognise a GATase cobBQ-type domain in the interval 239 to 422 (RIGVARDAAF…IHFYLPSDPL (184 aa)). Cys321 acts as the Nucleophile in catalysis.

Belongs to the CobB/CbiA family. Requires Mg(2+) as cofactor.

It catalyses the reaction hydrogenobyrinate + 2 L-glutamine + 2 ATP + 2 H2O = hydrogenobyrinate a,c-diamide + 2 L-glutamate + 2 ADP + 2 phosphate + 2 H(+). It participates in cofactor biosynthesis; adenosylcobalamin biosynthesis; cob(II)yrinate a,c-diamide from precorrin-2 (aerobic route): step 9/10. Functionally, catalyzes the ATP-dependent amidation of the two carboxylate groups at positions a and c of hydrogenobyrinate, using either L-glutamine or ammonia as the nitrogen source. The sequence is that of Hydrogenobyrinate a,c-diamide synthase from Stutzerimonas stutzeri (strain A1501) (Pseudomonas stutzeri).